A 129-amino-acid polypeptide reads, in one-letter code: Small ribosomal subunit protein bS6 (129 aa).

Residues 103 to 129 (LKQKEERAERAPRREERAEAKPEAAAE) are disordered. The segment covering 104-129 (KQKEERAERAPRREERAEAKPEAAAE) has biased composition (basic and acidic residues).

Belongs to the bacterial ribosomal protein bS6 family.

In terms of biological role, binds together with bS18 to 16S ribosomal RNA. This Vibrio campbellii (strain ATCC BAA-1116) protein is Small ribosomal subunit protein bS6.